Here is a 191-residue protein sequence, read N- to C-terminus: FAD-linked sulfhydryl oxidase ERV1 (191 aa).

The ERV/ALR sulfhydryl oxidase domain occupies 72–172 (GPVTKEDLGR…FPCERVDARW (101 aa)). FAD is bound by residues Lys76, Arg81, Trp84, Glu121, His125, Cys148, His151, Asn152, Asn155, Lys160, and Arg171. Cys119 and Cys122 are oxidised to a cystine. Cysteines 148 and 165 form a disulfide. A disulfide bond links Cys177 and Cys182. The Required for dimerization and substrate specificity signature appears at 177–182 (CEQKSC).

In terms of assembly, homodimer. Requires FAD as cofactor. Post-translationally, contains three disulfide bonds; one catalytic disulfide (Cys-119 to Cys-122), one structural disulfide (Cys-148 to Cys-165), and one shuttle disulfide (Cys-177 to Cys-182).

The protein localises to the mitochondrion. The enzyme catalyses 2 R'C(R)SH + O2 = R'C(R)S-S(R)CR' + H2O2. FAD-dependent sulfhydryl oxidase that catalyzes disulfide bond formation. Oxidizes thioredoxin in vitro. Required for the import and folding of small cysteine-containing proteins in the mitochondrial intermembrane space, and can act independently of the oxidoreductase MIA40. Can oxidize the cytochrome c oxidase assembly protein COX19, a typical substrate of MIA40. This chain is FAD-linked sulfhydryl oxidase ERV1 (ERV1), found in Arabidopsis thaliana (Mouse-ear cress).